An 852-amino-acid polypeptide reads, in one-letter code: Probable LRR receptor-like serine/threonine-protein kinase At1g05700 (852 aa).

The first 25 residues, 1-25 (MEEFRFLYLIYSAAFALCLVVSVLA), serve as a signal peptide directing secretion. The Extracellular segment spans residues 26-510 (QDQSGFISID…SCRKSNSKKL (485 aa)). N-linked (GlcNAc...) asparagine glycans are attached at residues Asn138, Asn182, Asn231, Asn240, Asn258, Asn293, Asn400, Asn415, and Asn431. 3 LRR repeats span residues 410–432 (RITS…FSNL), 434–457 (MIQE…SKLK), and 458–479 (FLRV…ELLE). Residue Asn466 is glycosylated (N-linked (GlcNAc...) asparagine). The chain crosses the membrane as a helical span at residues 511-531 (VIPLVASFAALFILLLLSGVF). The Cytoplasmic segment spans residues 532–852 (WRIRNRRNKS…LQREESNKNY (321 aa)). Thr561 is subject to Phosphothreonine. Residues 570–843 (NNFGQVLGKG…HIVRGLNECL (274 aa)) enclose the Protein kinase domain. Residues 576 to 584 (LGKGGFGTV) and Lys597 each bind ATP. The residue at position 642 (Tyr642) is a Phosphotyrosine. The active-site Proton acceptor is Asp693. 2 positions are modified to phosphoserine: Ser697 and Ser727. Thr728 and Thr733 each carry phosphothreonine.

This sequence belongs to the protein kinase superfamily. Ser/Thr protein kinase family.

The protein resides in the membrane. It carries out the reaction L-seryl-[protein] + ATP = O-phospho-L-seryl-[protein] + ADP + H(+). It catalyses the reaction L-threonyl-[protein] + ATP = O-phospho-L-threonyl-[protein] + ADP + H(+). This chain is Probable LRR receptor-like serine/threonine-protein kinase At1g05700, found in Arabidopsis thaliana (Mouse-ear cress).